Reading from the N-terminus, the 426-residue chain is Glucose-6-phosphate isomerase (426 aa).

Glu-282 serves as the catalytic Proton donor. Catalysis depends on residues His-303 and Lys-419.

It belongs to the GPI family.

It localises to the cytoplasm. It catalyses the reaction alpha-D-glucose 6-phosphate = beta-D-fructose 6-phosphate. It participates in carbohydrate biosynthesis; gluconeogenesis. It functions in the pathway carbohydrate degradation; glycolysis; D-glyceraldehyde 3-phosphate and glycerone phosphate from D-glucose: step 2/4. Catalyzes the reversible isomerization of glucose-6-phosphate to fructose-6-phosphate. The sequence is that of Glucose-6-phosphate isomerase from Mycoplasmoides gallisepticum (strain R(low / passage 15 / clone 2)) (Mycoplasma gallisepticum).